Here is a 212-residue protein sequence, read N- to C-terminus: MAIGVVGRKAGMTRIFTDEGQALPVTVIEVEPNRITQLKTLESDGYRAVQVTVGSRRSSRVNKAAAGHFAKAGVEAGRGVWEFRLADGEGEDLAAGGELTVSVFEDGQVVDAVGQSKGKGFQGGVKRWNFSMQDATHGNSLSHRAPGSIGQNQTPGKVFKGKKMAGQMGNAQVTVQNLKIVRVDAERNLLLVSGAVPGATGGDVVIKPAVKA.

Gln-153 carries the N5-methylglutamine modification.

Belongs to the universal ribosomal protein uL3 family. In terms of assembly, part of the 50S ribosomal subunit. Forms a cluster with proteins L14 and L19. In terms of processing, methylated by PrmB.

Functionally, one of the primary rRNA binding proteins, it binds directly near the 3'-end of the 23S rRNA, where it nucleates assembly of the 50S subunit. In Marinobacter nauticus (strain ATCC 700491 / DSM 11845 / VT8) (Marinobacter aquaeolei), this protein is Large ribosomal subunit protein uL3.